Reading from the N-terminus, the 381-residue chain is Subtilisin amylosacchariticus (381 aa).

An N-terminal signal peptide occupies residues 1-29 (MRSKKLWISLLFALTLIFTMAFSNMSAQA). Residues 30 to 106 (AGKSSTEKKY…VEEDHIAHEY (77 aa)) constitute a propeptide that is removed on maturation. The Inhibitor I9 domain occupies 38-103 (KYIVGFKQTM…VAYVEEDHIA (66 aa)). Position 108 (Gln-108) interacts with Ca(2+). One can recognise a Peptidase S8 domain in the interval 111 to 380 (PYGISQIKAP…KGLINVQAAA (270 aa)). Asp-138 acts as the Charge relay system in catalysis. Asp-147 provides a ligand contact to Ca(2+). His-170 functions as the Charge relay system in the catalytic mechanism. Residues Leu-181, Asn-183, Ile-185, Val-187, Ala-275, Tyr-277, and Thr-280 each contribute to the Ca(2+) site. The active-site Charge relay system is the Ser-327.

This sequence belongs to the peptidase S8 family. Ca(2+) serves as cofactor.

Its subcellular location is the secreted. The enzyme catalyses Hydrolysis of proteins with broad specificity for peptide bonds, and a preference for a large uncharged residue in P1. Hydrolyzes peptide amides.. Its function is as follows. Subtilisin is an extracellular alkaline serine protease, it catalyzes the hydrolysis of proteins and peptide amides. This is Subtilisin amylosacchariticus (apr) from Bacillus subtilis subsp. amylosacchariticus.